Reading from the N-terminus, the 193-residue chain is Xanthine phosphoribosyltransferase (193 aa).

2 residues coordinate xanthine: L20 and T27. 128–132 (ANGQA) provides a ligand contact to 5-phospho-alpha-D-ribose 1-diphosphate. Residue K156 coordinates xanthine.

The protein belongs to the purine/pyrimidine phosphoribosyltransferase family. Xpt subfamily. As to quaternary structure, homodimer.

The protein resides in the cytoplasm. It carries out the reaction XMP + diphosphate = xanthine + 5-phospho-alpha-D-ribose 1-diphosphate. It functions in the pathway purine metabolism; XMP biosynthesis via salvage pathway; XMP from xanthine: step 1/1. In terms of biological role, converts the preformed base xanthine, a product of nucleic acid breakdown, to xanthosine 5'-monophosphate (XMP), so it can be reused for RNA or DNA synthesis. This is Xanthine phosphoribosyltransferase from Streptococcus pyogenes serotype M3 (strain ATCC BAA-595 / MGAS315).